Consider the following 261-residue polypeptide: Small ribosomal subunit protein eS1B (261 aa).

A compositionally biased stretch (basic residues) spans 1-18 (MTLGKNKRISKGGKRGKK). A disordered region spans residues 1-23 (MTLGKNKRISKGGKRGKKKAQET).

It belongs to the eukaryotic ribosomal protein eS1 family. In terms of assembly, component of the small ribosomal subunit. Mature ribosomes consist of a small (40S) and a large (60S) subunit. The 40S subunit contains about 33 different proteins and 1 molecule of RNA (18S). The 60S subunit contains about 49 different proteins and 3 molecules of RNA (25S, 5.8S and 5S).

The protein resides in the cytoplasm. The protein is Small ribosomal subunit protein eS1B of Trypanosoma cruzi (strain CL Brener).